Consider the following 171-residue polypeptide: Ribosome maturation factor RimM (171 aa).

One can recognise a PRC barrel domain in the interval A96–L170.

The protein belongs to the RimM family. As to quaternary structure, binds ribosomal protein uS19.

It is found in the cytoplasm. An accessory protein needed during the final step in the assembly of 30S ribosomal subunit, possibly for assembly of the head region. Essential for efficient processing of 16S rRNA. May be needed both before and after RbfA during the maturation of 16S rRNA. It has affinity for free ribosomal 30S subunits but not for 70S ribosomes. The polypeptide is Ribosome maturation factor RimM (Bacillus mycoides (strain KBAB4) (Bacillus weihenstephanensis)).